Here is a 199-residue protein sequence, read N- to C-terminus: Recombination protein RecR (199 aa).

Residues 58–73 (CRICYNITDTEVCNIC) form a C4-type zinc finger. Positions 81-176 (SLICVVSHPM…KVTRIAHGVP (96 aa)) constitute a Toprim domain.

Belongs to the RecR family.

May play a role in DNA repair. It seems to be involved in an RecBC-independent recombinational process of DNA repair. It may act with RecF and RecO. The sequence is that of Recombination protein RecR from Thermoanaerobacter pseudethanolicus (strain ATCC 33223 / 39E) (Clostridium thermohydrosulfuricum).